The primary structure comprises 572 residues: Outer spore wall assembly protein SHE10 (572 aa).

An N-terminal signal peptide occupies residues 1-19 (MRAISKLFVFTVLVLGSLQ). Coiled coils occupy residues 351-372 (SQAN…REVV) and 485-510 (FQER…LREQ). The disordered stretch occupies residues 539–572 (STSWSVPPADARAEPASGSPIQQAASEAAQQPSV). Residues 560 to 572 (QQAASEAAQQPSV) show a composition bias toward low complexity.

Belongs to the SHE10 family. As to quaternary structure, component of the mitochondria-localized RNase mitochondrial RNA-processing (RNase MRP) composed of one single RNA encoded by the NME1 gene and at least 31 proteins. Absent in the nucleus-localized RNase MRP (NuMRP).

It localises to the mitochondrion. In terms of biological role, involved in spore wall assembly. May be a component of the mitochondrial RNase MRP (MtMRP), a ribonucleoprotein endoribonuclease involved in the cleaving RNA transcripts to generate primers for DNA replication in mitochondria. The protein is Outer spore wall assembly protein SHE10 of Eremothecium gossypii (strain ATCC 10895 / CBS 109.51 / FGSC 9923 / NRRL Y-1056) (Yeast).